Here is a 173-residue protein sequence, read N- to C-terminus: Shikimate kinase 1 (173 aa).

Glycine 14–threonine 19 provides a ligand contact to ATP. Serine 18 provides a ligand contact to Mg(2+). Residues aspartate 36, arginine 60, and glycine 82 each contribute to the substrate site. ATP is bound at residue arginine 120. Arginine 140 provides a ligand contact to substrate. Glutamine 157 contributes to the ATP binding site.

It belongs to the shikimate kinase family. Monomer. The cofactor is Mg(2+).

Its subcellular location is the cytoplasm. The enzyme catalyses shikimate + ATP = 3-phosphoshikimate + ADP + H(+). It participates in metabolic intermediate biosynthesis; chorismate biosynthesis; chorismate from D-erythrose 4-phosphate and phosphoenolpyruvate: step 5/7. Its function is as follows. Catalyzes the specific phosphorylation of the 3-hydroxyl group of shikimic acid using ATP as a cosubstrate. The chain is Shikimate kinase 1 from Citrobacter koseri (strain ATCC BAA-895 / CDC 4225-83 / SGSC4696).